A 170-amino-acid chain; its full sequence is uncharacterized protein (170 aa).

The 160-residue stretch at Leu-8–Glu-167 folds into the N-acetyltransferase domain.

It belongs to the acetyltransferase family.

This is an uncharacterized protein from Bacillus subtilis (strain 168).